The sequence spans 113 residues: Hydrogenase maturation factor HypA (113 aa).

Histidine 2 serves as a coordination point for Ni(2+). Cysteine 73, cysteine 76, cysteine 89, and cysteine 92 together coordinate Zn(2+).

The protein belongs to the HypA/HybF family.

Its function is as follows. Involved in the maturation of [NiFe] hydrogenases. Required for nickel insertion into the metal center of the hydrogenase. The chain is Hydrogenase maturation factor HypA from Legionella pneumophila (strain Paris).